Reading from the N-terminus, the 616-residue chain is MATIQSETDCYDIIEVLGKGTFGEVAKGWRRSTGEMVAIKILKNDAYRSRIIKNELKLLRCVRGLDPDEAHVIRFLEFFHDALKFYLVFELLEQNLFEFQKENNFAPLPARHIRTVTLQVLRALARLKELAIIHADLKPENIMLVDQTRCPFRVKVIDFGSASIFSEVRYVKEPYIQSRFYRAPEILLGLPFCEKVDVWSLGCVMAELHLGWPLYPGNNEYDQVRYICETQGLPKPHLLHAARKAHHFFKRNPHPDATNPWQLKSSADYLAETKVRPLERRKYMLKSLDQIETVNGGGAVSRLSFPDREALAEHADLKSMVELIKRMLTWESHERISPSAALRHPFVSMQQLRSAHEATRYYQLSLRGCRLSLQVDGKPPPPVIASAEDGPPYYRLAEEEETAGLGGVTGSGSFFREDKAPGMQRAIDQLDDLSLQEARRGLWSDTRADMVSDMLVPLKVASTSHRVPDSGPEPILAFYGSRLTGRHKARKAPAGSKSDSNFSNLIRLSQASPEDAGPCRGSGWEEGEGRTTSTEPSVIPQREGDGPGIKDRPMDAERPGPELFDPSSCPGEWLSEPEWTLEGIRGSRAQGLPAHHPHPHGPPRTTSFLQHVGGHH.

Residues 11-347 enclose the Protein kinase domain; sequence YDIIEVLGKG…PSAALRHPFV (337 aa). Residues 17–25 and Lys40 each bind ATP; that span reads LGKGTFGEV. Asp136 serves as the catalytic Proton acceptor. Residues 487-616 form a disordered region; the sequence is HKARKAPAGS…SFLQHVGGHH (130 aa). Polar residues predominate over residues 497 to 512; the sequence is KSDSNFSNLIRLSQAS. The residue at position 512 (Ser512) is a Phosphoserine. The segment covering 542-560 has biased composition (basic and acidic residues); that stretch reads REGDGPGIKDRPMDAERPG.

This sequence belongs to the protein kinase superfamily. CMGC Ser/Thr protein kinase family. HIPK subfamily. Post-translationally, autophosphorylated. Expressed at moderate levels in lung and white adipose tissues and weakly in brain and liver.

The protein resides in the cytoplasm. The catalysed reaction is L-seryl-[protein] + ATP = O-phospho-L-seryl-[protein] + ADP + H(+). It catalyses the reaction L-threonyl-[protein] + ATP = O-phospho-L-threonyl-[protein] + ADP + H(+). Its function is as follows. Protein kinase that phosphorylates murine TP53 at Ser-9, and thus induces TP53 repression of BIRC5 promoter. May act as a corepressor of transcription factors (Potential). The protein is Homeodomain-interacting protein kinase 4 (Hipk4) of Mus musculus (Mouse).